Consider the following 35-residue polypeptide: Cupiennin-1b (35 aa).

Residue Glu35 is modified to Glutamic acid 1-amide.

It belongs to the cationic peptide 04 (cupiennin) family. 01 subfamily. As to expression, expressed by the venom gland.

It is found in the secreted. Has antimicrobial activity against E.coli, E.faecalis, P.aeruginosa, and S.aureus. Has insecticidal and hemolytic activities. Probably acts by disturbing membrane function with its amphipathic structure. In Cupiennius salei (American wandering spider), this protein is Cupiennin-1b.